Consider the following 31-residue polypeptide: M-poneritoxin-Nc3b (31 aa).

The protein belongs to the ponericin-G family. In terms of tissue distribution, expressed by the venom gland.

It is found in the secreted. It localises to the target cell membrane. Its function is as follows. Membrane-perturbating peptide with a few moderate activities. It is insecticidal, since it induces reversible paralysis in insects (L.cuprina) after 1 hour, but fails to kill them. It is also antiparasitic, since it moderately inhibits the larval development of the major pathogenic nematode of ruminants (H.contortus, IC(50)=23.2 uM) and reduces the motility of adult males of the other nematode B.malayi. It does not show antibacterial activity (MIC&gt;40 uM). It is not cytotoxic to HEK293 cells and does not induce hemolysis in human erythrocytes. It does not cause an increase in intracellular calcium concentration on neuronal and epithelial cell lines. This Neoponera commutata (Large hunting ant) protein is M-poneritoxin-Nc3b.